We begin with the raw amino-acid sequence, 211 residues long: UPF0637 protein BLi01683/BL05149 (211 aa).

Belongs to the UPF0637 family.

The chain is UPF0637 protein BLi01683/BL05149 from Bacillus licheniformis (strain ATCC 14580 / DSM 13 / JCM 2505 / CCUG 7422 / NBRC 12200 / NCIMB 9375 / NCTC 10341 / NRRL NRS-1264 / Gibson 46).